We begin with the raw amino-acid sequence, 117 residues long: Anti-adapter protein IraM (117 aa).

It belongs to the IraM/RssC family.

The protein localises to the cytoplasm. Functionally, involved in the stabilization of the sigma stress factor RpoS. The chain is Anti-adapter protein IraM from Klebsiella pneumoniae (strain 342).